Reading from the N-terminus, the 830-residue chain is Interleukin-4 receptor subunit alpha (830 aa).

A signal peptide spans 1-32 (MGWLCPGLTFSVSCLILVWAAGSGVTCVSPGG). Residues 33 to 240 (VRVLEWPICL…NYYEEPLEQR (208 aa)) lie on the Extracellular side of the membrane. An intrachain disulfide couples C41 to C51. Residues N60 and N78 are each glycosylated (N-linked (GlcNAc...) asparagine). A disulfide bond links C82 and C94. N120, N142, and N170 each carry an N-linked (GlcNAc...) asparagine glycan. The region spanning 133–232 (APRNLMVHAN…WSPSVKWLNY (100 aa)) is the Fibronectin type-III domain. Phosphoserine is present on S172. N-linked (GlcNAc...) asparagine glycosylation is found at N184 and N217. The WSXWS motif motif lies at 220 to 224 (WSEWS). The helical transmembrane segment at 241-264 (LPLGVSISCVVILIICLSCYFGII) threads the bilayer. The Cytoplasmic portion of the chain corresponds to 265-830 (RIKKEWWDQI…SPGPACMDTS (566 aa)). Positions 270-278 (WWDQIPNPA) match the Box 1 motif motif. Positions 378–387 (ENEEEEEEED) are enriched in acidic residues. Disordered stretches follow at residues 378-403 (ENEE…GSFQ) and 450-488 (MPWA…SLAS). Positions 444 to 564 (ENASAPMPWA…ETWEQILRQS (121 aa)) are required for IRS1 activation and IL4-induced cell growth. Position 504 is a phosphotyrosine (Y504). Disordered stretches follow at residues 508–610 (STFL…EAGY) and 623–696 (CPGT…DGQK). Acidic residues predominate over residues 518-534 (GELDSDPELAEALEEVE). Over residues 538-551 (PAAPQPSEPPPTLQ) the composition is skewed to pro residues. The segment at 564-662 (SVLQRRAAPA…VPTPLFTFGL (99 aa)) is required for IL4-induced gene expression. Low complexity predominate over residues 570–582 (AAPAPASGPSSSG). Phosphotyrosine is present on residues Y583 and Y610. Positions 623-635 (CPGTSGLEPSSGE) are enriched in polar residues. The residue at position 638 (Y638) is a Phosphotyrosine. Pro residues-rich tracts occupy residues 646–655 (PGCPETPVPT) and 665–676 (EPPPSPQNPPFP). The ITIM motif signature appears at 716–721 (IVYSAL). Residues 811 to 830 (SQTPTAVAMLSPGPACMDTS) are disordered.

Belongs to the type I cytokine receptor family. Type 4 subfamily. The functional IL4 receptor is formed by initial binding of IL4 to IL4R. Subsequent recruitment to the complex of the common gamma chain, in immune cells, creates a type I receptor and, in non-immune cells, of IL13RA1 forms a type II receptor. IL4R can also interact with the IL13/IL13RA1 complex to form a similar type II receptor. Interacts with PIK3C3. Interacts with the SH2-containing phosphatases, PTPN6/SHIP1, PTPN11/SHIP2 and INPP5D/SHIP. Interacts with JAK1 through a Box 1-containing region; inhibited by SOCS5. Interacts with SOCS5; inhibits IL4 signaling. Interacts with JAK3. Interacts with CLM1. Interacts with IL13RA2. On IL4 binding, phosphorylated on C-terminal tyrosine residues.

The protein resides in the membrane. Its function is as follows. Receptor for both interleukin 4 and interleukin 13. Couples to the JAK1/2/3-STAT6 pathway. The IL4 response is involved in promoting Th2 differentiation. The IL4/IL13 responses are involved in regulating IgE production and, chemokine and mucus production at sites of allergic inflammation. In certain cell types, can signal through activation of insulin receptor substrates, IRS1/IRS2. The chain is Interleukin-4 receptor subunit alpha (IL4R) from Sus scrofa (Pig).